The following is a 245-amino-acid chain: tRNA (guanine-N(1)-)-methyltransferase (245 aa).

S-adenosyl-L-methionine contacts are provided by residues Gly108 and 127 to 132; that span reads IGDYVL.

The protein belongs to the RNA methyltransferase TrmD family. As to quaternary structure, homodimer.

The protein resides in the cytoplasm. The enzyme catalyses guanosine(37) in tRNA + S-adenosyl-L-methionine = N(1)-methylguanosine(37) in tRNA + S-adenosyl-L-homocysteine + H(+). Its function is as follows. Specifically methylates guanosine-37 in various tRNAs. This chain is tRNA (guanine-N(1)-)-methyltransferase, found in Lactobacillus delbrueckii subsp. bulgaricus (strain ATCC 11842 / DSM 20081 / BCRC 10696 / JCM 1002 / NBRC 13953 / NCIMB 11778 / NCTC 12712 / WDCM 00102 / Lb 14).